The following is a 185-amino-acid chain: MKTAQELRVGNVVQIGSDAWVIAKTEYNKSGRNAAVVKMKMKNLLTNAGQESVYKADDKFDVVMLDRKEVTYSYFADPMYVFMDADYNQYEVEAEMMGEALNYLEDGMACEVVFYNEKAISVELPTILVREITYTEPAVKGDTSSGKVLKNAKLATGFELQVPLFCSTGDKIEIDTRTNEYRSRA.

It belongs to the elongation factor P family.

It is found in the cytoplasm. Its pathway is protein biosynthesis; polypeptide chain elongation. In terms of biological role, involved in peptide bond synthesis. Stimulates efficient translation and peptide-bond synthesis on native or reconstituted 70S ribosomes in vitro. Probably functions indirectly by altering the affinity of the ribosome for aminoacyl-tRNA, thus increasing their reactivity as acceptors for peptidyl transferase. The polypeptide is Elongation factor P (Burkholderia ambifaria (strain MC40-6)).